Consider the following 216-residue polypeptide: MVLTIEALKHLWRVDESRVGRTEPLPLDNRHYVNGHPLCDAFTGLAQIQFGLGCFWGAERLFWQLPGVFSTAAGYAGGGVPYPTYREVCSGETGHAEVVLVVYDHTVISFEQLLQTFWESHDPTQGMRQGNDIGTQYRSVIHCTTSEQYAAASASREVYQQQLNTAGYTAITTEILHPAPPFYYAENEHQQYLAKHPNGYCGLGGTGVTCAIRLQV.

Cys-54 is a catalytic residue.

The protein belongs to the MsrA Met sulfoxide reductase family.

It catalyses the reaction L-methionyl-[protein] + [thioredoxin]-disulfide + H2O = L-methionyl-(S)-S-oxide-[protein] + [thioredoxin]-dithiol. It carries out the reaction [thioredoxin]-disulfide + L-methionine + H2O = L-methionine (S)-S-oxide + [thioredoxin]-dithiol. Its function is as follows. Has an important function as a repair enzyme for proteins that have been inactivated by oxidation. Catalyzes the reversible oxidation-reduction of methionine sulfoxide in proteins to methionine. In Xylella fastidiosa (strain M12), this protein is Peptide methionine sulfoxide reductase MsrA.